Consider the following 473-residue polypeptide: Sulfhydrylase-like protein lolC1 (473 aa).

Lys-226 is subject to N6-(pyridoxal phosphate)lysine.

It belongs to the trans-sulfuration enzymes family. The cofactor is pyridoxal 5'-phosphate.

It participates in alkaloid biosynthesis. Its function is as follows. Sulfhydrylase-like protein; part of the gene cluster that mediates the biosynthesis of loline alkaloids, potent insecticidal agents composed of a pyrrolizidine ring system and an uncommon ether bridge linking carbons 2 and 7. Lolines are structurally differentiated by the various modifications of the L-amino group and include norloline, loline, N-methylloline, N-acetylloline, N-acetylnorloline, and N-formylloline. The first committed step is the condensation of O-acetyl-L-homoserine (derived from L-aspartic acid) and L-proline, probably catalyzed by the gamma-type pyridoxal 5'-phosphate(PLP)-dependent enzyme lolC, to give the diamino diacid, NACPP. Ensuing cyclization, decarboxylation, and acetylation steps yield 1-exo-acetamidopyrrolizidine (AcAP). LolO is required for installation of the ether bridge upon the pathway intermediate, 1-exo-acetamidopyrrolizidine (AcAP). In sequential 2-oxoglutarate- and O(2)-consuming steps, lolO removes hydrogens from C2 and C7 of AcAP to form both carbon-oxygen bonds in N-acetylnorloline (NANL), the precursor to all other lolines. The enzymes lolD, lolE, lolF and lolT have also been proposed to be involved in the ether-bridge installation. Further processing of the exocyclic moiety of NANL by fungal N-acetamidase (LolN), methyltransferase (LolM), and cytochrome P450 (LolP) enzymes, with occasional involvement of a plant acetyltransferase, generates the other known lolines. LolN transforms NANL to norlonine which is monomethylated and dimethylated to respectively lonine and N-methyllonine (NML) by lolM. LolP catalyzes hydroxylation of the methyl group in N-methylloline (NML) and further oxygenation to N-formylloline (NFL). A plant acetyltransferase is responsible for the acetylation of loline to form N-acetylloline (NAL). LolA might interact with aspartate kinase to prevent feedback inhibition of its activity by these end products and thereby promote production of L-homoserine from L-aspartate. This chain is Sulfhydrylase-like protein lolC1, found in Epichloe uncinata (Endophyte fungus).